The sequence spans 369 residues: Actin-related protein 2/3 complex subunit 1B-A (369 aa).

7 WD repeats span residues 6–45 (FLLE…WSKI), 50–89 (EHNG…WKPT), 94–135 (RINR…WVCK), 140–179 (PIRS…VEER), 200–239 (SSCG…RVTS), 242–282 (TDTL…LSFG), and 321–364 (LHKN…SAMK).

This sequence belongs to the WD repeat ARPC1 family. Component of the Arp2/3 complex composed of actr2/arp2, actr3/arp3, arpc1 (arpc1a or arpc1b), arpc2, arpc3, arpc4 and arpc5.

The protein localises to the cytoplasm. It localises to the cytoskeleton. Its subcellular location is the nucleus. In terms of biological role, component of the Arp2/3 complex, a multiprotein complex that mediates actin polymerization upon stimulation by nucleation-promoting factor (NPF). The Arp2/3 complex mediates the formation of branched actin networks in the cytoplasm, providing the force for cell motility. In addition to its role in the cytoplasmic cytoskeleton, the Arp2/3 complex also promotes actin polymerization in the nucleus, thereby regulating gene transcription and repair of damaged DNA. The Arp2/3 complex promotes homologous recombination (HR) repair in response to DNA damage by promoting nuclear actin polymerization, leading to drive motility of double-strand breaks (DSBs). The sequence is that of Actin-related protein 2/3 complex subunit 1B-A (arpc1b-a) from Xenopus laevis (African clawed frog).